The sequence spans 615 residues: MFS-type transporter 1 (615 aa).

The segment at 1–85 (MTALAAVPDL…GNNVSPHGRH (85 aa)) is disordered. Over residues 16–53 (PSTTTVHSPNYSGSPADISSSPTTRAVSRNTARQTASA) the composition is skewed to polar residues. An N-linked (GlcNAc...) asparagine glycan is attached at N25. Helical transmembrane passes span 94–114 (CLVI…SGIL), 138–158 (VYSL…HIIG), 162–182 (VWIT…RSAT), 192–212 (VLGV…TNGF), 222–242 (FAFQ…LGGI), and 251–271 (FGFY…LVVL). A glycan (N-linked (GlcNAc...) asparagine) is linked at N302. Transmembrane regions (helical) follow at residues 320–340 (WTGT…FSVV), 351–371 (QNIA…LWVG), 397–417 (AAVF…ALYF), 432–452 (FLPM…LVET), 455–475 (VRWL…IMAL), 488–508 (FAML…NLII), 522–542 (AVFN…TAVV), and 585–605 (AAFW…FLGL).

It belongs to the major facilitator superfamily. EmrB family.

It localises to the membrane. Its function is as follows. MFS-type transporter; part of the gene cluster that mediates the biosynthesis of pyriculol and pyriculariol, two heptaketides that induce lesion formation upon application on rice leaves but are dispensable for pathogenicity. With the ABC transporter ABC7, is most likely responsible for pyriculol and pyriculariol secretion and thereby may contribute to intrinsic resistance. This is MFS-type transporter 1 from Pyricularia oryzae (strain 70-15 / ATCC MYA-4617 / FGSC 8958) (Rice blast fungus).